The sequence spans 226 residues: tRNA (guanine-N(1)-)-methyltransferase (226 aa).

S-adenosyl-L-methionine-binding positions include Gly112 and Ile132–Leu137.

It belongs to the RNA methyltransferase TrmD family. As to quaternary structure, homodimer.

The protein resides in the cytoplasm. It catalyses the reaction guanosine(37) in tRNA + S-adenosyl-L-methionine = N(1)-methylguanosine(37) in tRNA + S-adenosyl-L-homocysteine + H(+). Its function is as follows. Specifically methylates guanosine-37 in various tRNAs. This is tRNA (guanine-N(1)-)-methyltransferase from Christiangramia forsetii (strain DSM 17595 / CGMCC 1.15422 / KT0803) (Gramella forsetii).